An 831-amino-acid chain; its full sequence is Multiphosphoryl transfer protein (831 aa).

The region spanning M1–S90 is the HPr domain. H15 serves as the catalytic Pros-phosphohistidine intermediate; for HPr activity. The residue at position 15 (H15) is a Phosphohistidine; by EI. The tract at residues G119–D650 is PTS EI. H298 (tele-phosphohistidine intermediate; for PTS EI activity) is an active-site residue. H298 carries the post-translational modification Phosphohistidine; by autocatalysis. Residues R405 and R441 each contribute to the phosphoenolpyruvate site. Mg(2+) contacts are provided by E540 and D564. Residues N563–D564 and R574 each bind phosphoenolpyruvate. C611 serves as the catalytic Proton donor; for EI activity. The PTS EIIA type-2 domain occupies P685–E828. H747 acts as the Tele-phosphohistidine intermediate; for PTS EIIA activity in catalysis. At H747 the chain carries Phosphohistidine; by HPr.

Belongs to the PEP-utilizing enzyme family. The cofactor is Mg(2+).

It localises to the cytoplasm. It catalyses the reaction L-histidyl-[protein] + phosphoenolpyruvate = N(pros)-phospho-L-histidyl-[protein] + pyruvate. It carries out the reaction D-fructose(out) + N(pros)-phospho-L-histidyl-[protein] = D-fructose 1-phosphate(in) + L-histidyl-[protein]. In terms of biological role, multifunctional protein that includes general (non sugar-specific) and sugar-specific components of the phosphoenolpyruvate-dependent sugar phosphotransferase system (sugar PTS). This major carbohydrate active transport system catalyzes the phosphorylation of incoming sugar substrates concomitantly with their translocation across the cell membrane. The enzyme II FryABC PTS system is involved in fructose transport. This Escherichia coli O6:H1 (strain CFT073 / ATCC 700928 / UPEC) protein is Multiphosphoryl transfer protein (fryA).